We begin with the raw amino-acid sequence, 1612 residues long: MAHFQQTMNNKVIEAGMGRNSLINDLAQRRVYDNAVEELNHRSRRPRVNFSKVISQEQIIQATNAYPEFEITFYNTQLAVHSMAGGLRALELEYLMMQIPFGSITYDIGGNFSAHLYKGRDYVHCCMPNLDIRDVARHINQQDTVSTYLARLERSKRGLPVFQQSAFNKYMNDPDAVCCDKRFQDCSYSAGLPGKTYAVGLHSIYDIPADEFGAALLRKDVHICYAAFHFSENLLLETTSAPLDEIGATFYKSGDRLSFFFQNESTLNYEHSYKNVIKYVCKTFFPASNRFVYHKEFMCTRVNTWFCKFTKVDTYFLFRGVYTRGEDSEQFYTAMDEAWEYKKTLAMLNSERTIFRDRAAVNFWFPKVKDMVIVPLFDGSVTSGKMKRSEVMVNKDFVYTVLNHIRTYQDKALTYKNVLSFVESIRSRVIINGVTARSEWDVDKSVLQALSMTFLLQTKLAEAKDQVVLKKFQKFDDTVTNLFWKQISDAVGDLFPSIKERLISGGFVKVAEQSLQIKTPDEYITPADKLVMEYQATEELQHLDISKPLERAEKYYNALSELSVLKECDEFDITQFKNLCEEKDIAPDVVAKVIVPIMKNELTLPFKNPTPEALSDALSPLPKDLDMRFCLLKLSTCAPFPSVKTLDSGLLPKQSYGDERQFESQSVVSVSDFHLKSVESVKMKSMSSAVYTGPLKVQQMKNYMDYLSASISATVSNLCKVLKDVYGADPESAEKSGVYDVVKGKWLLKPKDKCHAWGVAELNNGEKVIVLLEWADGFPICGDWRRVAVSSDSPIYSDMGKLQTLLSCLKDGEPVLRMPKVTLVDGVPGCGKTKEILETVNFDEDLILVPGKEACKMIIKRANKSGHVRATRDNVRTVDSFLMHLKPKTYNKLFIDEGLMLHTGCVNFLVALSHCREAMVFGDAEQIPFINRVANFPYPKHFRYTCLYHREVRRLSLRCPADVTHFMNSKYDGKVLCTNDVIRSVDAEVVRGKGVFNPKSKPLKGKIITFTQSDKAELKERGYEEVSTFGEINTVHEIQGETFEDVSVVRLTPTPLELISKSSPHVLVALTRHTKSFKYYSVVLDPLVKVWSDLSKVSDFILDMYKVDAGILXQLQVGSIFKGENLFVPCPKSGYISDMQTYYDTLVPGNSTILNEYDAVTMNLRENNLNVKDCTIDFSKSVSVPRQQQEFFTPAHRTAAERPRSAGLLENLVAMIKRNFNSPDLTGILDIEDTAELVVNKFWDAYIIDELSGGNVTPMTSDAFHRWMAKQEKSTIGQLADFDFVDLPAIDQYKHMIKAQPKQKLGLSPQDEYAALQTIVYHSKQINAIFGPLFSELTRQLLERIDSSKFLFYTRKTPEQIEAFFSDLDSTVPMEVLELDISKYDKSQNEFHCAVEYLIWEKLGLNGFLEEVWKQGHRKTSLKDYTAGIKTCLWYQRKSGDVTTFIGNTVIIAACLASMIPMDKVIKAAFCGDDSILYIPKGLDLPDIQSGANLMWNFEAKLYRKRYGYFCGRYIIHHDRGAIVYYDPLKLISKLGCKHIKSLDHLEEFRISLCDVSSSLNNCAYFGQLNDAIAEVHKTAVNGSFAFCSIVKYLSDKNLFRTLFNNGSSTKG.

The methyltransferase stretch occupies residues Phe50–Met452. Residues Thr72–Val280 enclose the Alphavirus-like MT domain. The 160-residue stretch at Pro794–Arg953 folds into the (+)RNA virus helicase ATP-binding domain. Residues Thr822–Tyr1080 form a helicase region. Residue Gly826–Thr833 coordinates ATP. The (+)RNA virus helicase C-terminal domain occupies Arg954 to Leu1112. In terms of domain architecture, RdRp catalytic spans Met1374–Asp1487.

It belongs to the ssRNA positive-strand viruses RNA-directed RNA polymerase family. As to quaternary structure, heterodimer of a large and a small subunit.

The catalysed reaction is RNA(n) + a ribonucleoside 5'-triphosphate = RNA(n+1) + diphosphate. The enzyme catalyses ATP + H2O = ADP + phosphate + H(+). Is an RNA-dependent RNA polymerase active in viral RNA replication. In terms of biological role, is a methyltransferase active in RNA capping and an RNA helicase. Methyltransferase displays a cytoplasmic capping enzyme activity. This function is necessary since all viral RNAs are synthesized in the cytoplasm, and host capping enzymes are restricted to the nucleus. Helicase region probably exhibits NTPase and RNA unwinding activities (Potential). It also acts as a suppressor of RNA-mediated gene silencing, also known as post-transcriptional gene silencing (PTGS), a mechanism of plant viral defense that limits the accumulation of viral RNAs. May mediate silencing suppression through either inhibition of HEN1-mediated siRNA or siRNA demethylation. This Cymbidium (ORSV) protein is Replicase large subunit.